The chain runs to 166 residues: Cold-inducible RNA-binding protein (166 aa).

In terms of domain architecture, RRM spans 6–84 (GKLFVGGLNF…RQIRVDQAGK (79 aa)). A disordered region spans residues 68–166 (NGKSVDGRQI…DSYDSYTTQE (99 aa)). The segment covering 93–120 (YRGGSSGGRGFFRGGRGRGGGGDRGYGG) has biased composition (gly residues). A compositionally biased stretch (low complexity) spans 121 to 166 (SSRFENRSGGYQSSGSRDYYGRSHGSYGDRSGGSYRDSYDSYTTQE).

As to quaternary structure, interacts with prmt1. Interacts with elavl1/elrA (via RRM3). Associates with ribosomes. Methylated on arginine residues within RGG motifs. Methylation by prmt1 promotes cytoplasmic accumulation.

The protein resides in the nucleus. It localises to the nucleoplasm. It is found in the cytoplasm. Cold-inducible mRNA binding protein. Acts cooperatively with elavl1/elrA to stabilize AU-rich element (ARE)-containing mRNAs by binding to themm and inhibiting their deadenylation. Essential for embryonic gastrulation and neural development, acting to maintain the expression of a set of adhesion molecules, and cell movement during embryogenesis. Required for pronephros development. This is Cold-inducible RNA-binding protein from Xenopus tropicalis (Western clawed frog).